A 473-amino-acid chain; its full sequence is Fumarate hydratase class II (473 aa).

Substrate contacts are provided by residues 105–107 (SGT), 130–133 (HPND), 140–142 (SSN), and threonine 188. The Proton donor/acceptor role is filled by histidine 189. Residue serine 319 is part of the active site. Residues serine 320 and 325–327 (KVN) each bind substrate.

The protein belongs to the class-II fumarase/aspartase family. Fumarase subfamily. As to quaternary structure, homotetramer.

The protein resides in the cytoplasm. It carries out the reaction (S)-malate = fumarate + H2O. It participates in carbohydrate metabolism; tricarboxylic acid cycle; (S)-malate from fumarate: step 1/1. Involved in the TCA cycle. Catalyzes the stereospecific interconversion of fumarate to L-malate. In Xylella fastidiosa (strain 9a5c), this protein is Fumarate hydratase class II.